We begin with the raw amino-acid sequence, 256 residues long: Imidazole glycerol phosphate synthase subunit HisF (256 aa).

Catalysis depends on residues Asp-12 and Asp-131.

It belongs to the HisA/HisF family. As to quaternary structure, heterodimer of HisH and HisF.

It localises to the cytoplasm. It carries out the reaction 5-[(5-phospho-1-deoxy-D-ribulos-1-ylimino)methylamino]-1-(5-phospho-beta-D-ribosyl)imidazole-4-carboxamide + L-glutamine = D-erythro-1-(imidazol-4-yl)glycerol 3-phosphate + 5-amino-1-(5-phospho-beta-D-ribosyl)imidazole-4-carboxamide + L-glutamate + H(+). It participates in amino-acid biosynthesis; L-histidine biosynthesis; L-histidine from 5-phospho-alpha-D-ribose 1-diphosphate: step 5/9. Its function is as follows. IGPS catalyzes the conversion of PRFAR and glutamine to IGP, AICAR and glutamate. The HisF subunit catalyzes the cyclization activity that produces IGP and AICAR from PRFAR using the ammonia provided by the HisH subunit. The chain is Imidazole glycerol phosphate synthase subunit HisF from Pseudomonas entomophila (strain L48).